We begin with the raw amino-acid sequence, 616 residues long: Dihydroxy-acid dehydratase (616 aa).

Asp-81 is a Mg(2+) binding site. Cys-122 is a binding site for [2Fe-2S] cluster. 2 residues coordinate Mg(2+): Asp-123 and Lys-124. Lys-124 carries the post-translational modification N6-carboxylysine. [2Fe-2S] cluster is bound at residue Cys-195. Mg(2+) is bound at residue Glu-491. The Proton acceptor role is filled by Ser-517.

Belongs to the IlvD/Edd family. In terms of assembly, homodimer. [2Fe-2S] cluster serves as cofactor. The cofactor is Mg(2+).

The enzyme catalyses (2R)-2,3-dihydroxy-3-methylbutanoate = 3-methyl-2-oxobutanoate + H2O. It catalyses the reaction (2R,3R)-2,3-dihydroxy-3-methylpentanoate = (S)-3-methyl-2-oxopentanoate + H2O. It participates in amino-acid biosynthesis; L-isoleucine biosynthesis; L-isoleucine from 2-oxobutanoate: step 3/4. It functions in the pathway amino-acid biosynthesis; L-valine biosynthesis; L-valine from pyruvate: step 3/4. Its function is as follows. Functions in the biosynthesis of branched-chain amino acids. Catalyzes the dehydration of (2R,3R)-2,3-dihydroxy-3-methylpentanoate (2,3-dihydroxy-3-methylvalerate) into 2-oxo-3-methylpentanoate (2-oxo-3-methylvalerate) and of (2R)-2,3-dihydroxy-3-methylbutanoate (2,3-dihydroxyisovalerate) into 2-oxo-3-methylbutanoate (2-oxoisovalerate), the penultimate precursor to L-isoleucine and L-valine, respectively. This chain is Dihydroxy-acid dehydratase, found in Escherichia coli (strain K12 / MC4100 / BW2952).